The chain runs to 343 residues: Ribosomal RNA small subunit methyltransferase H (343 aa).

Residues 39–41 (AGH), Asp58, Phe87, Asp108, and Gln115 each bind S-adenosyl-L-methionine.

It belongs to the methyltransferase superfamily. RsmH family.

The protein localises to the cytoplasm. The enzyme catalyses cytidine(1402) in 16S rRNA + S-adenosyl-L-methionine = N(4)-methylcytidine(1402) in 16S rRNA + S-adenosyl-L-homocysteine + H(+). Its function is as follows. Specifically methylates the N4 position of cytidine in position 1402 (C1402) of 16S rRNA. The protein is Ribosomal RNA small subunit methyltransferase H of Bifidobacterium adolescentis (strain ATCC 15703 / DSM 20083 / NCTC 11814 / E194a).